Consider the following 239-residue polypeptide: Ribosomal RNA small subunit methyltransferase G (239 aa).

S-adenosyl-L-methionine-binding positions include glycine 79, phenylalanine 84, 130–131 (AE), and arginine 149. Over residues 218–227 (KHKKTPKKYP) the composition is skewed to basic residues. The interval 218-239 (KHKKTPKKYPRQAGTPNKKPIA) is disordered.

Belongs to the methyltransferase superfamily. RNA methyltransferase RsmG family.

The protein localises to the cytoplasm. Specifically methylates the N7 position of a guanine in 16S rRNA. The protein is Ribosomal RNA small subunit methyltransferase G of Leuconostoc citreum (strain KM20).